The sequence spans 431 residues: STE20-related kinase adapter protein alpha (431 aa).

Serine 2 and serine 46 each carry phosphoserine. Disordered stretches follow at residues 32 to 52 and 314 to 344; these read EQPPGDTRRKANEASSESIAS and PSRSIANPGLNDSLAAGSLRPSNGDSPSHPY. Residues 69–379 enclose the Protein kinase domain; it reads YELLTIIGKG…ASTLLNHSFF (311 aa). Threonine 419 bears the Phosphothreonine; by LKB1 mark.

It belongs to the protein kinase superfamily. STE Ser/Thr protein kinase family. STE20 subfamily. In terms of assembly, component of a trimeric complex composed of STK11/LKB1, STRAD (STRADA or STRADB) and CAB39/MO25 (CAB39/MO25alpha or CAB39L/MO25beta): the complex tethers STK11/LKB1 in the cytoplasm and stimulates its catalytic activity.

It is found in the nucleus. Its subcellular location is the cytoplasm. Its function is as follows. Pseudokinase which, in complex with CAB39/MO25 (CAB39/MO25alpha or CAB39L/MO25beta), binds to and activates STK11/LKB1. Adopts a closed conformation typical of active protein kinases and binds STK11/LKB1 as a pseudosubstrate, promoting conformational change of STK11/LKB1 in an active conformation. This is STE20-related kinase adapter protein alpha (Strada) from Mus musculus (Mouse).